Reading from the N-terminus, the 398-residue chain is Serpin-Z1C (398 aa).

Positions 343-367 (GTEAAASTAIKMALLQARPPSVMDF) are RCL.

This sequence belongs to the serpin family.

Functionally, inhibits chymotrypsin and cathepsin G in vitro. The protein is Serpin-Z1C of Triticum aestivum (Wheat).